A 191-amino-acid polypeptide reads, in one-letter code: Prostaglandin-H2 D-isomerase (191 aa).

An N-terminal signal peptide occupies residues 1-24 (MATPNRPWMGLLLLGVLGVLQTPA). The N-linked (GlcNAc...) asparagine glycan is linked to Asn-51. Cys-65 serves as the catalytic Nucleophile. The N-linked (GlcNAc...) asparagine glycan is linked to Asn-78. Cysteines 89 and 186 form a disulfide.

The protein belongs to the calycin superfamily. Lipocalin family. In terms of assembly, monomer. As to expression, in the male reproductive system, it is expressed in the testis and epididymis, and is secreted into the seminal fluid.

The protein localises to the rough endoplasmic reticulum. The protein resides in the nucleus membrane. It is found in the golgi apparatus. Its subcellular location is the cytoplasm. It localises to the perinuclear region. The protein localises to the secreted. The enzyme catalyses prostaglandin H2 = prostaglandin D2. In terms of biological role, catalyzes the conversion of PGH2 to PGD2, a prostaglandin involved in smooth muscle contraction/relaxation and a potent inhibitor of platelet aggregation. Involved in a variety of CNS functions, such as sedation, NREM sleep and PGE2-induced allodynia, and may have an anti-apoptotic role in oligodendrocytes. Binds small non-substrate lipophilic molecules, including biliverdin, bilirubin, retinal, retinoic acid and thyroid hormone, and may act as a scavenger for harmful hydrophobic molecules and as a secretory retinoid and thyroid hormone transporter. Possibly involved in development and maintenance of the blood-brain, blood-retina, blood-aqueous humor and blood-testis barrier. It is likely to play important roles in both maturation and maintenance of the central nervous system and male reproductive system. Involved in PLA2G3-dependent maturation of mast cells. PLA2G3 is secreted by immature mast cells and acts on nearby fibroblasts upstream to PTDGS to synthesize PGD2, which in turn promotes mast cell maturation and degranulation via PTGDR. The polypeptide is Prostaglandin-H2 D-isomerase (PTGDS) (Ovis aries (Sheep)).